The sequence spans 836 residues: General vesicular transport factor p115 (836 aa).

The disordered stretch occupies residues 1 to 22 (MEFLKSGIKTVLGSTEPGQQPS). Over residues 12-22 (LGSTEPGQQPS) the composition is skewed to polar residues. ARM repeat units follow at residues 24–64 (AETV…VGAQ), 65–124 (GMPP…IKTP), 126–166 (HVTL…LILV), 169–210 (MGVS…VAFE), 211–256 (NAFD…FKEG), 316–359 (RLLH…LGRV), 368–413 (PAIV…QTLL), 424–463 (STGQ…EELL), 477–518 (TLLE…KALL), 523–577 (TMAY…IIKR), and 579–636 (GQES…LVSG). Coiled coils occupy residues 663-707 (IIRG…DQNT) and 744-806 (NMYF…EEAG). The segment at 803-836 (EEAGSTNTLPTSNVAPSVPAAGGGSPIPSGTASR) is disordered. Over residues 806-816 (GSTNTLPTSNV) the composition is skewed to polar residues. The segment covering 817-836 (APSVPAAGGGSPIPSGTASR) has biased composition (low complexity).

This sequence belongs to the VDP/USO1/EDE1 family.

The protein localises to the cytoplasm. It is found in the golgi apparatus. The protein resides in the golgi stack. It localises to the golgi stack membrane. Its subcellular location is the endoplasmic reticulum. The protein localises to the endoplasmic reticulum membrane. Essential for maintaining the architecture of the Golgi stacks and for normal organization of the transitional endoplasmic reticulum (tER). Required for both the formation of the Golgi stacks and the maintenance of the individual cisternae. The chain is General vesicular transport factor p115 from Drosophila melanogaster (Fruit fly).